A 182-amino-acid polypeptide reads, in one-letter code: Keratin, high-sulfur matrix protein, B2D (182 aa).

Tandem repeats lie at residues 27–36 (PTCCQTSCCQ), 37–46 (PTSIQTSCCQ), 47–56 (PTSIQTSCCQ), 57–66 (PTSIQTSCCQ), 67–76 (PISIQTSCCQ), and 77–86 (PTCLQTSGCE). The segment at 27 to 86 (PTCCQTSCCQPTSIQTSCCQPTSIQTSCCQPTSIQTSCCQPISIQTSCCQPTCLQTSGCE) is 6 X 10 AA tandem repeats.

In terms of biological role, the keratin products of mammalian epidermal derivatives such as wool and hair consist of microfibrils embedded in a rigid matrix of other proteins. The matrix proteins include the high-sulfur and high-tyrosine keratins, having molecular weights of 6-20 kDa, whereas the microfibrils contain the larger, low-sulfur keratins (40-56 kDa). This chain is Keratin, high-sulfur matrix protein, B2D, found in Ovis aries (Sheep).